A 267-amino-acid chain; its full sequence is MDTNAKTIFFMAMCFIYLSFPNISHAHSEVDDETPFTYEQKTEKGPEGWGKINPHWKVCNTGRYQSPIDLTNERVSLIHDQAWTRQYKPAPAVITNRGHDIMVSWKGDAGKMTIRKTDFNLVQCHWHSPSEHTVNGTRYDLELHMVHTSARGRTAVIGVLYKLGEPNEFLTKLLNGIKAVGNKEINLGMIDPREIRFQTRKFYRYIGSLTVPPCTEGVIWTVVKRVNTISMEQITALRQAVDDGFETNSRPVQDSKGRSVWFYDPNV.

An N-terminal signal peptide occupies residues 1 to 26 (MDTNAKTIFFMAMCFIYLSFPNISHA). A glycan (N-linked (GlcNAc...) asparagine) is linked at N22. The 231-residue stretch at 34–264 (TPFTYEQKTE…SKGRSVWFYD (231 aa)) folds into the Alpha-carbonic anhydrase domain. A disulfide bond links C59 and C214. Catalysis depends on H99, which acts as the Proton acceptor. Zn(2+) is bound by residues H125 and H127. A glycan (N-linked (GlcNAc...) asparagine) is linked at N135. Residue H144 participates in Zn(2+) binding. Residue 210-211 (TV) coordinates substrate.

The protein belongs to the alpha-class carbonic anhydrase family. Requires Zn(2+) as cofactor. Post-translationally, N-glycosylated.

The protein localises to the plastid. The protein resides in the chloroplast stroma. The catalysed reaction is hydrogencarbonate + H(+) = CO2 + H2O. Functionally, reversible hydration of carbon dioxide. This is Alpha carbonic anhydrase 4 (ACA4) from Arabidopsis thaliana (Mouse-ear cress).